The sequence spans 581 residues: AP2-like ethylene-responsive transcription factor AIL6 (581 aa).

2 disordered regions span residues 105–132 and 205–240; these read VRYSDNSQTDTQDSSLTQIYDPRHHHNQ and NNTNHRNDNDNHYRGNNNGERINNNNNNDNEKTDSE. 2 stretches are compositionally biased toward low complexity: residues 108-122 and 218-232; these read SDNSQTDTQDSSLTQ and RGNNNGERINNNNNN. 2 consecutive DNA-binding regions (AP2/ERF) follow at residues 268–331 and 367–425; these read IYRG…TNFP and IYRG…TNFE.

It belongs to the AP2/ERF transcription factor family. AP2 subfamily. As to expression, expressed in roots, seedlings, hypocotyl, inflorescence, siliques, and pistils. Also detected at low levels in leaves.

The protein resides in the nucleus. Functionally, probably acts as a transcriptional activator. Binds to the GCC-box pathogenesis-related promoter element. May be involved in the regulation of gene expression by stress factors and by components of stress signal transduction pathways. This chain is AP2-like ethylene-responsive transcription factor AIL6, found in Arabidopsis thaliana (Mouse-ear cress).